The primary structure comprises 157 residues: Transcription antitermination protein NusB (157 aa).

This sequence belongs to the NusB family.

Involved in transcription antitermination. Required for transcription of ribosomal RNA (rRNA) genes. Binds specifically to the boxA antiterminator sequence of the ribosomal RNA (rrn) operons. The protein is Transcription antitermination protein NusB of Helicobacter hepaticus (strain ATCC 51449 / 3B1).